We begin with the raw amino-acid sequence, 3146 residues long: Bassianolide nonribosomal cyclodepsipeptide synthetase (3146 aa).

Polar residues predominate over residues 1–12 (MEPPNNANTGQL). The segment at 1-23 (MEPPNNANTGQLGPTLPNGTVDL) is disordered. The segment at 69–454 (HVVYEIPEDV…INKLQSTDGS (386 aa)) is condensation 1. The tract at residues 495-887 (GDTPNKPAVC…GRMDSQVKIR (393 aa)) is adenylation 1. One can recognise a Carrier 1 domain in the interval 1015-1091 (PDASAGVTKL…SLQAAIGGSS (77 aa)). O-(pantetheine 4'-phosphoryl)serine is present on Ser-1052. Residues 1109-1538 (SYSQGRLWFL…QTLISVVPLT (430 aa)) are condensation 2. The adenylation 2 stretch occupies residues 1567 to 1973 (FRTQVASYPD…GRMDFQFKIR (407 aa)). The interval 2041–2181 (TYTELDTVSS…FPTRDYLERV (141 aa)) is S-adenosyl-L-methionine-dependent N-methyltransferase (MT). 2 Carrier domains span residues 2514 to 2588 (FPLS…RQQL) and 2614 to 2688 (APTT…EVSQ). Ser-2548 and Ser-2648 each carry O-(pantetheine 4'-phosphoryl)serine. A condensation 3 region spans residues 2734–3138 (QDVYLATHLQ…THLMEQVCNT (405 aa)).

The protein belongs to the NRP synthetase family.

The enzyme catalyses 4 (R)-2-hydroxy-3-methylbutanoate + 4 L-leucine + 4 S-adenosyl-L-methionine + 8 ATP = bassianolide + 8 AMP + 4 S-adenosyl-L-homocysteine + 8 diphosphate + 8 H(+). Bassianolide nonribosomal synthetase that mediates the biosynthesis of bassianolide (BSL), a non-ribosomal cyclodepsipeptide that shows insecticidal and cancer cell antiproliferative activity. BSLS first catalyzes the iterative synthesis of an enzyme-bound dipeptidol monomer intermediate from D-2-hydroxyisovalerate and L-leucine before performing the condensation and cyclization of 4 dipeptidol monomers to yield the cyclic tetrameric ester bassianolide. The N-methyltransferase MT domain is responsible for the methylation of the leucine residues of bassianolide. BSLS is flexible with both the amino acid and hydroxyl acid precursors, and produces bassianolide as the major product (containing N-methyl-L-Leu), together with small amounts of beauvericin and its analogs beauvericins A-C (containing N-methyl-L-Phe). The protein is Bassianolide nonribosomal cyclodepsipeptide synthetase of Beauveria bassiana (White muscardine disease fungus).